An 85-amino-acid chain; its full sequence is uncharacterized protein (85 aa).

This is an uncharacterized protein from Enterobacteria phage T3 (Bacteriophage T3).